The sequence spans 304 residues: Olfactory receptor 52A4 (304 aa).

Topologically, residues 1-32 (MALPITNGTLFMPFVLTFIGIPGFESVQCWIG) are extracellular. Residue asparagine 7 is glycosylated (N-linked (GlcNAc...) asparagine). The chain crosses the membrane as a helical span at residues 33-53 (IPFCATYVIALIGNSLLLIII). Over 54 to 61 (KSEPSLHE) the chain is Cytoplasmic. A helical membrane pass occupies residues 62 to 82 (PMYIFLATLGATDISLSTSIV). Topologically, residues 83–103 (PKMLDIFWFHLPEIYFDACLF) are extracellular. Cysteine 101 and cysteine 184 are joined by a disulfide. A helical membrane pass occupies residues 104–124 (QMWLIHTFQGIESGVLLAMAL). At 125 to 146 (DRCVAICYPLRRAIVFTRQLVT) the chain is on the cytoplasmic side. The chain crosses the membrane as a helical span at residues 147–167 (YIVVGVTLRPAILVIPCLLLI). Topologically, residues 168–203 (KCHLKLYRTKLIYHTYCERVALVKLATEDVYINKVY) are extracellular. A helical membrane pass occupies residues 204-224 (GILGAFIVGGLDFIFITLSYI). Residues 225–255 (QIFITVFHLPLKEARLKVFNTCIPHIYVFFQ) lie on the Cytoplasmic side of the membrane. A helical transmembrane segment spans residues 256–276 (FYLLAFFFIFYSQIWILYPII). Residues 277 to 279 (CTY) are Extracellular-facing. Residues 280-300 (HLVQSLPTGPTIPQPLYLWVK) form a helical membrane-spanning segment. The Cytoplasmic segment spans residues 301–304 (DQTH).

The protein belongs to the G-protein coupled receptor 1 family.

The protein localises to the cell membrane. Odorant receptor. This chain is Olfactory receptor 52A4, found in Homo sapiens (Human).